Here is a 177-residue protein sequence, read N- to C-terminus: Nucleoside triphosphate/diphosphate phosphatase (177 aa).

Arginine 23 serves as the catalytic Proton donor. Residues asparagine 87, aspartate 103, aspartate 105, aspartate 107, aspartate 120, and glutamate 123 each coordinate Mg(2+).

This sequence belongs to the Ntdp family. The cofactor is Mg(2+).

It carries out the reaction a ribonucleoside 5'-triphosphate + H2O = a ribonucleoside 5'-diphosphate + phosphate + H(+). The catalysed reaction is a ribonucleoside 5'-diphosphate + H2O = a ribonucleoside 5'-phosphate + phosphate + H(+). Functionally, has nucleoside phosphatase activity towards nucleoside triphosphates and nucleoside diphosphates. In Enterococcus faecalis (strain ATCC 700802 / V583), this protein is Nucleoside triphosphate/diphosphate phosphatase.